The sequence spans 241 residues: Protein GrpE (241 aa).

The segment covering 28–49 has biased composition (basic and acidic residues); that stretch reads QNCQKEETQTTNKDNQKEDETF. The segment at 28-78 is disordered; the sequence is QNCQKEETQTTNKDNQKEDETFKNQPNKTKQTNTKQQKHLSKESSHQQITK. Residues 50–62 show a composition bias toward low complexity; sequence KNQPNKTKQTNTK.

The protein belongs to the GrpE family. In terms of assembly, homodimer.

Its subcellular location is the cytoplasm. Its function is as follows. Participates actively in the response to hyperosmotic and heat shock by preventing the aggregation of stress-denatured proteins, in association with DnaK and GrpE. It is the nucleotide exchange factor for DnaK and may function as a thermosensor. Unfolded proteins bind initially to DnaJ; upon interaction with the DnaJ-bound protein, DnaK hydrolyzes its bound ATP, resulting in the formation of a stable complex. GrpE releases ADP from DnaK; ATP binding to DnaK triggers the release of the substrate protein, thus completing the reaction cycle. Several rounds of ATP-dependent interactions between DnaJ, DnaK and GrpE are required for fully efficient folding. The chain is Protein GrpE from Aster yellows witches'-broom phytoplasma (strain AYWB).